Here is a 121-residue protein sequence, read N- to C-terminus: UPF0295 protein ABC1323 (121 aa).

Helical transmembrane passes span 14–34 (TFALSLVFVGILIMYVGIFFK) and 41–61 (VIAMILGFLAVIASTVVYFFI).

Belongs to the UPF0295 family.

The protein resides in the cell membrane. The protein is UPF0295 protein ABC1323 of Shouchella clausii (strain KSM-K16) (Alkalihalobacillus clausii).